A 184-amino-acid polypeptide reads, in one-letter code: Translation initiation factor IF-3 (184 aa).

The protein belongs to the IF-3 family. In terms of assembly, monomer.

Its subcellular location is the cytoplasm. IF-3 binds to the 30S ribosomal subunit and shifts the equilibrium between 70S ribosomes and their 50S and 30S subunits in favor of the free subunits, thus enhancing the availability of 30S subunits on which protein synthesis initiation begins. This is Translation initiation factor IF-3 from Mycoplasma genitalium (strain ATCC 33530 / DSM 19775 / NCTC 10195 / G37) (Mycoplasmoides genitalium).